We begin with the raw amino-acid sequence, 391 residues long: Phosphoglycerate kinase (391 aa).

Residues 23–25 (DFN), Arg38, 61–64 (HLGK), Arg117, and Arg150 each bind substrate. ATP-binding positions include Lys201, Gly291, Glu322, and 348-351 (GGDS).

It belongs to the phosphoglycerate kinase family. As to quaternary structure, monomer.

It localises to the cytoplasm. The catalysed reaction is (2R)-3-phosphoglycerate + ATP = (2R)-3-phospho-glyceroyl phosphate + ADP. It functions in the pathway carbohydrate degradation; glycolysis; pyruvate from D-glyceraldehyde 3-phosphate: step 2/5. The protein is Phosphoglycerate kinase of Clostridium beijerinckii (strain ATCC 51743 / NCIMB 8052) (Clostridium acetobutylicum).